A 473-amino-acid polypeptide reads, in one-letter code: Photosystem II CP43 reaction center protein (473 aa).

The propeptide occupies 1–14 (MKILYSLRRFYHVE). Thr15 bears the N-acetylthreonine mark. Thr15 is modified (phosphothreonine). A run of 5 helical transmembrane segments spans residues 69-93 (LFEV…PHLA), 134-155 (LLGP…KDRN), 178-200 (KALY…RKIT), 255-275 (KPFA…LSYS), and 291-312 (WFNN…ASQA). Glu367 lines the [CaMn4O5] cluster pocket. The chain crosses the membrane as a helical span at residues 447-471 (RARAAAAGFEKGIDRDLEPVLFMTP).

This sequence belongs to the PsbB/PsbC family. PsbC subfamily. As to quaternary structure, PSII is composed of 1 copy each of membrane proteins PsbA, PsbB, PsbC, PsbD, PsbE, PsbF, PsbH, PsbI, PsbJ, PsbK, PsbL, PsbM, PsbT, PsbX, PsbY, PsbZ, Psb30/Ycf12, at least 3 peripheral proteins of the oxygen-evolving complex and a large number of cofactors. It forms dimeric complexes. It depends on Binds multiple chlorophylls and provides some of the ligands for the Ca-4Mn-5O cluster of the oxygen-evolving complex. It may also provide a ligand for a Cl- that is required for oxygen evolution. PSII binds additional chlorophylls, carotenoids and specific lipids. as a cofactor.

Its subcellular location is the plastid. The protein resides in the chloroplast thylakoid membrane. Its function is as follows. One of the components of the core complex of photosystem II (PSII). It binds chlorophyll and helps catalyze the primary light-induced photochemical processes of PSII. PSII is a light-driven water:plastoquinone oxidoreductase, using light energy to abstract electrons from H(2)O, generating O(2) and a proton gradient subsequently used for ATP formation. In Lemna minor (Common duckweed), this protein is Photosystem II CP43 reaction center protein.